A 95-amino-acid chain; its full sequence is Co-chaperonin GroES (95 aa).

The protein belongs to the GroES chaperonin family. As to quaternary structure, heptamer of 7 subunits arranged in a ring. Interacts with the chaperonin GroEL.

It is found in the cytoplasm. Its function is as follows. Together with the chaperonin GroEL, plays an essential role in assisting protein folding. The GroEL-GroES system forms a nano-cage that allows encapsulation of the non-native substrate proteins and provides a physical environment optimized to promote and accelerate protein folding. GroES binds to the apical surface of the GroEL ring, thereby capping the opening of the GroEL channel. The sequence is that of Co-chaperonin GroES from Geobacter sulfurreducens (strain ATCC 51573 / DSM 12127 / PCA).